A 403-amino-acid polypeptide reads, in one-letter code: Arginine biosynthesis bifunctional protein ArgJ (403 aa).

Polar residues predominate over residues 1-11 (MVQSVLSSTSH). Residues 1 to 21 (MVQSVLSSTSHGSERADMSAA) form a disordered region. Substrate-binding residues include Thr161, Lys183, Thr194, Glu273, Asn398, and Thr403. Catalysis depends on Thr194, which acts as the Nucleophile.

Belongs to the ArgJ family. Heterotetramer of two alpha and two beta chains.

The protein localises to the cytoplasm. It catalyses the reaction N(2)-acetyl-L-ornithine + L-glutamate = N-acetyl-L-glutamate + L-ornithine. The enzyme catalyses L-glutamate + acetyl-CoA = N-acetyl-L-glutamate + CoA + H(+). The protein operates within amino-acid biosynthesis; L-arginine biosynthesis; L-ornithine and N-acetyl-L-glutamate from L-glutamate and N(2)-acetyl-L-ornithine (cyclic): step 1/1. Its pathway is amino-acid biosynthesis; L-arginine biosynthesis; N(2)-acetyl-L-ornithine from L-glutamate: step 1/4. Functionally, catalyzes two activities which are involved in the cyclic version of arginine biosynthesis: the synthesis of N-acetylglutamate from glutamate and acetyl-CoA as the acetyl donor, and of ornithine by transacetylation between N(2)-acetylornithine and glutamate. The chain is Arginine biosynthesis bifunctional protein ArgJ from Rhodococcoides fascians (Rhodococcus fascians).